The primary structure comprises 491 residues: Endoglucanase 14 (491 aa).

The first 31 residues, 1-31 (MSQLKIGSSQCLWTSICIVLFVLSMARGAVS), serve as a signal peptide directing secretion. The active-site Nucleophile is the Asp86. N-linked (GlcNAc...) asparagine glycosylation is present at Asn397. Catalysis depends on residues His413, Asp465, and Glu474.

The protein belongs to the glycosyl hydrolase 9 (cellulase E) family.

It is found in the secreted. The catalysed reaction is Endohydrolysis of (1-&gt;4)-beta-D-glucosidic linkages in cellulose, lichenin and cereal beta-D-glucans.. The chain is Endoglucanase 14 from Arabidopsis thaliana (Mouse-ear cress).